The chain runs to 235 residues: Phosphoribosylaminoimidazole-succinocarboxamide synthase (235 aa).

This sequence belongs to the SAICAR synthetase family.

It carries out the reaction 5-amino-1-(5-phospho-D-ribosyl)imidazole-4-carboxylate + L-aspartate + ATP = (2S)-2-[5-amino-1-(5-phospho-beta-D-ribosyl)imidazole-4-carboxamido]succinate + ADP + phosphate + 2 H(+). It functions in the pathway purine metabolism; IMP biosynthesis via de novo pathway; 5-amino-1-(5-phospho-D-ribosyl)imidazole-4-carboxamide from 5-amino-1-(5-phospho-D-ribosyl)imidazole-4-carboxylate: step 1/2. The protein is Phosphoribosylaminoimidazole-succinocarboxamide synthase of Streptococcus thermophilus (strain CNRZ 1066).